Consider the following 201-residue polypeptide: 3-isopropylmalate dehydratase small subunit (201 aa).

This sequence belongs to the LeuD family. LeuD type 1 subfamily. As to quaternary structure, heterodimer of LeuC and LeuD.

The enzyme catalyses (2R,3S)-3-isopropylmalate = (2S)-2-isopropylmalate. Its pathway is amino-acid biosynthesis; L-leucine biosynthesis; L-leucine from 3-methyl-2-oxobutanoate: step 2/4. In terms of biological role, catalyzes the isomerization between 2-isopropylmalate and 3-isopropylmalate, via the formation of 2-isopropylmaleate. This chain is 3-isopropylmalate dehydratase small subunit, found in Shewanella sp. (strain MR-7).